Here is a 105-residue protein sequence, read N- to C-terminus: MSWIILLIAGLLEVVWAVGLKYTHGFSRLTPSIITITAMVISMALLSWAMKTLPVGTAYAIWTGIGAVGAAITGILLLGESASPARLLSLGLIVAGIIGLKLSAH.

A helical transmembrane segment spans residues 1–21; sequence MSWIILLIAGLLEVVWAVGLK. The Cytoplasmic portion of the chain corresponds to 22-28; the sequence is YTHGFSR. A helical transmembrane segment spans residues 29-49; the sequence is LTPSIITITAMVISMALLSWA. Residues 50-57 are Periplasmic-facing; that stretch reads MKTLPVGT. A helical membrane pass occupies residues 58–78; the sequence is AYAIWTGIGAVGAAITGILLL. Topologically, residues 79-81 are cytoplasmic; it reads GES. A helical transmembrane segment spans residues 82–102; it reads ASPARLLSLGLIVAGIIGLKL. The Periplasmic segment spans residues 103–105; it reads SAH.

It belongs to the drug/metabolite transporter (DMT) superfamily. Small multidrug resistance (SMR) (TC 2.A.7.1) family. Gdx/SugE subfamily.

It localises to the cell inner membrane. Its function is as follows. Guanidinium ion exporter. Couples guanidinium export to the proton motive force, exchanging one guanidinium ion for two protons. The protein is Guanidinium exporter of Salmonella typhi.